Consider the following 109-residue polypeptide: Putative double-stranded DNA mimic protein YciU (109 aa).

The protein belongs to the putative dsDNA mimic protein family.

May act as a double-stranded DNA (dsDNA) mimic. Probably regulates the activity of a dsDNA-binding protein. This is Putative double-stranded DNA mimic protein YciU from Salmonella paratyphi B (strain ATCC BAA-1250 / SPB7).